Consider the following 178-residue polypeptide: Pyruvate synthase subunit PorC (178 aa).

As to quaternary structure, heterotetramer of one alpha, one beta, one delta and one gamma chain.

The enzyme catalyses 2 oxidized [2Fe-2S]-[ferredoxin] + pyruvate + CoA = 2 reduced [2Fe-2S]-[ferredoxin] + acetyl-CoA + CO2 + H(+). The protein is Pyruvate synthase subunit PorC (porC) of Methanocaldococcus jannaschii (strain ATCC 43067 / DSM 2661 / JAL-1 / JCM 10045 / NBRC 100440) (Methanococcus jannaschii).